The following is a 296-amino-acid chain: SPbeta prophage-derived endonuclease YokF (296 aa).

A signal peptide spans 1–19 (MKKVLLGFAAFTLSLSLAA). C20 carries the N-palmitoyl cysteine lipid modification. Residue C20 is the site of S-diacylglycerol cysteine attachment. The disordered stretch occupies residues 20–65 (CSSNDSEKVSTEKETPQASTDVEKKTEQKESTKEKTADKSKEKDKK). Basic and acidic residues predominate over residues 24 to 65 (DSEKVSTEKETPQASTDVEKKTEQKESTKEKTADKSKEKDKK). The region spanning 66 to 199 (ELVDVTLDRA…KSEKLSIWSK (134 aa)) is the TNase-like domain. Residue D79 participates in Ca(2+) binding. R93 is an active-site residue. D98 and T99 together coordinate Ca(2+). Residues E101 and R144 contribute to the active site. Residues 218-296 (AVKKATTSKP…RDHDNYACER (79 aa)) are disordered. The span at 219–244 (VKKATTSKPAATQPTTPKASSETSTT) shows a compositional bias: low complexity. The span at 284 to 296 (KMDRDHDNYACER) shows a compositional bias: basic and acidic residues.

Requires Ca(2+) as cofactor. The cofactor is Cu(2+). Mn(2+) is required as a cofactor.

The protein resides in the cell membrane. With respect to regulation, inhibited by aurintricalboxylic acid but not by Zn(2+), Mn(2+), Hg(2+), 2-mercaptoethanol and sodium citrate. Neither inhibited nor activated by ATP. In terms of biological role, catalyzes the hydrolysis of supercoiled double and single strand DNA and RNA. Involved in chromosomal DNA degradation and cell death caused by thermal stress. This chain is SPbeta prophage-derived endonuclease YokF (yokF), found in Bacillus subtilis (strain 168).